The chain runs to 787 residues: Phenylalanine--tRNA ligase beta subunit (787 aa).

Residues 38-151 (GQDPAPFVVA…SDYEVGDSFF (114 aa)) enclose the tRNA-binding domain. The 78-residue stretch at 397 to 474 (SEGRVISFNP…RMHGYDKVQE (78 aa)) folds into the B5 domain. Positions 452, 458, 461, and 462 each coordinate Mg(2+). Residues 694-785 (HKYQPVKRDF…VAQKLGGELR (92 aa)) form the FDX-ACB domain.

Belongs to the phenylalanyl-tRNA synthetase beta subunit family. Type 1 subfamily. Tetramer of two alpha and two beta subunits. It depends on Mg(2+) as a cofactor.

It localises to the cytoplasm. It catalyses the reaction tRNA(Phe) + L-phenylalanine + ATP = L-phenylalanyl-tRNA(Phe) + AMP + diphosphate + H(+). The protein is Phenylalanine--tRNA ligase beta subunit of Anaplasma marginale (strain St. Maries).